Here is a 41-residue protein sequence, read N- to C-terminus: Perlinhibin (41 aa).

In terms of processing, contains four disulfide bonds.

In terms of biological role, binds to calcite crystals in the shell and inhibits further shell growth at the binding site. The chain is Perlinhibin from Haliotis laevigata (Smooth Australian abalone).